Reading from the N-terminus, the 362-residue chain is 3-dehydroquinate synthase (362 aa).

NAD(+) is bound by residues 71 to 76, 105 to 109, 129 to 130, K142, K151, and 169 to 172; these read DGEKYK, GVIGD, TT, and CLKT. Residues E184, H247, and H264 each coordinate Zn(2+).

This sequence belongs to the sugar phosphate cyclases superfamily. Dehydroquinate synthase family. Co(2+) is required as a cofactor. The cofactor is Zn(2+). NAD(+) serves as cofactor.

It is found in the cytoplasm. It catalyses the reaction 7-phospho-2-dehydro-3-deoxy-D-arabino-heptonate = 3-dehydroquinate + phosphate. The protein operates within metabolic intermediate biosynthesis; chorismate biosynthesis; chorismate from D-erythrose 4-phosphate and phosphoenolpyruvate: step 2/7. Functionally, catalyzes the conversion of 3-deoxy-D-arabino-heptulosonate 7-phosphate (DAHP) to dehydroquinate (DHQ). The polypeptide is 3-dehydroquinate synthase (Citrobacter koseri (strain ATCC BAA-895 / CDC 4225-83 / SGSC4696)).